A 169-amino-acid polypeptide reads, in one-letter code: Calcium-binding protein G (169 aa).

EF-hand domains follow at residues 9 to 44, 60 to 83, 92 to 127, and 133 to 162; these read KIFQDIQNFIQDYDLNKDYSVTSSEIYQSFLKKMNG, VDMDNDGKFSYYEISKYCADQAKK, AALADVEALLLRLDKDKDKKLNKTEFVKFFKEQGYN, and DYVLKIIDLDKDGYVSASELQEWFKQKRLA. Positions 105, 107, 109, 111, 116, 140, 142, 144, 146, and 151 each coordinate Ca(2+).

The chain is Calcium-binding protein G (cbpG) from Dictyostelium discoideum (Social amoeba).